The sequence spans 198 residues: Probable GTP-binding protein EngB (198 aa).

Positions 36–198 constitute an EngB-type G domain; sequence SDPQFAFIGR…NLSKLQELLE (163 aa). GTP contacts are provided by residues 44–51, 70–74, 88–91, 155–158, and 182–184; these read GRSNVGKS, GRTQL, DLPG, NKID, and ISA. Residues Ser51 and Thr72 each contribute to the Mg(2+) site.

The protein belongs to the TRAFAC class TrmE-Era-EngA-EngB-Septin-like GTPase superfamily. EngB GTPase family. Mg(2+) is required as a cofactor.

Its function is as follows. Necessary for normal cell division and for the maintenance of normal septation. In Mesomycoplasma hyopneumoniae (strain 7448) (Mycoplasma hyopneumoniae), this protein is Probable GTP-binding protein EngB.